A 578-amino-acid chain; its full sequence is Vesicular acetylcholine transporter (578 aa).

Residues 1–32 (MASFQIPVINLEVREVKDIVWEKIQEPVNQRR) are Cytoplasmic-facing. Residues 33–53 (LILVIVSIALLLDNMLYMVIV) form a helical membrane-spanning segment. Residues 54–98 (PIIPDYLREIGSFDDGPTPPPLRDNITGKIIPVHHDHHGQDSATG) are Lumenal, vesicle-facing. Asn-78 carries an N-linked (GlcNAc...) asparagine glycan. The chain crosses the membrane as a helical span at residues 99-119 (ILFASKAIVQLMVNPFSGGLI). At 120–125 (DKIGYD) the chain is on the cytoplasmic side. A helical membrane pass occupies residues 126-146 (LPMMIGLTIMFFSTAVFACGS). Residues 147-154 (SYSVLFFA) are Lumenal, vesicle-facing. A helical membrane pass occupies residues 155-175 (RSLQGAGSAFADTAGLAMIAD). Residues 176 to 187 (RFTEENERSQAL) are Cytoplasmic-facing. The chain crosses the membrane as a helical span at residues 188-208 (GIALAFISFGCLVAPPFGGAL). Residues 209-215 (YQFAGKE) are Lumenal, vesicle-facing. The chain crosses the membrane as a helical span at residues 216–236 (VPFLILALVCLLDGLMLLLVM). At 237–263 (KPVKEAMKQSKDVQDQVIPIWRLLMDP) the chain is on the cytoplasmic side. A helical membrane pass occupies residues 264-284 (YIAVCAGALTMSNVALAFLEP). Residues 285 to 299 (TISLWMEDNMTTDNW) are Lumenal, vesicle-facing. A glycan (N-linked (GlcNAc...) asparagine) is linked at Asn-293. The helical transmembrane segment at 300–320 (KIGMVWLPAFFPHVLGVVITV) threads the bilayer. At 321 to 330 (KMARKYPQHQ) the chain is on the cytoplasmic side. A helical membrane pass occupies residues 331–351 (WLMAAGGLALEGFSCFIIPFC). The Lumenal, vesicle portion of the chain corresponds to 352 to 355 (SGYK). The helical transmembrane segment at 356-376 (MLMLPICVICFGIALIDTALL) threads the bilayer. At 377–387 (PTLGYLVDVRY) the chain is on the cytoplasmic side. Residues 388–408 (VSVYGSIYAIADISYSIAYAV) form a helical membrane-spanning segment. Residues 409-413 (GPIIA) lie on the Lumenal, vesicle side of the membrane. Residues 414–434 (GGVVEAIGFTALNFLIAFSNL) form a helical membrane-spanning segment. At 435 to 578 (AYVPVLRKLR…APANPFRQGF (144 aa)) the chain is on the cytoplasmic side. 2 stretches are compositionally biased toward low complexity: residues 507 to 534 (EYQQQQQGYQQGYQQDQGYQPGYQEQGG) and 549 to 563 (QQQQQQQQQQQQQVQ). The tract at residues 507–578 (EYQQQQQGYQ…APANPFRQGF (72 aa)) is disordered.

The protein belongs to the major facilitator superfamily. Vesicular transporter family.

The protein localises to the membrane. Its function is as follows. Involved in acetylcholine transport into synaptic vesicles. The polypeptide is Vesicular acetylcholine transporter (VAChT) (Drosophila melanogaster (Fruit fly)).